The primary structure comprises 317 residues: Melanocyte-stimulating hormone receptor (317 aa).

At 1–37 (MPVQGSQRRLLGSLNSTPTATPHLGLAANQTGARCLE) the chain is on the extracellular side. Asn-29 carries an N-linked (GlcNAc...) asparagine glycan. A helical membrane pass occupies residues 38-63 (VSVPDGLFLSLGLVSLVENVLVVTAI). Residues 64-72 (AKNRNLHSP) are Cytoplasmic-facing. The chain crosses the membrane as a helical span at residues 73–93 (MYCFICCLALSDLLVSGSNML). The Extracellular segment spans residues 94 to 118 (ETAVTLLLEAGVLAARAAVVQQLDN). A helical transmembrane segment spans residues 119–140 (VIDVITCSSMLSSLCFLGAIAV). The Cytoplasmic segment spans residues 141–163 (DRYISIFYALRYHSIVTLPRARR). Residues 164-183 (AVAAIWVASVLFSTLFIAYY) form a helical membrane-spanning segment. At 184-191 (DHAAVLLC) the chain is on the extracellular side. The helical transmembrane segment at 192–211 (LVIFFLAMLVLMAVLYVHML) threads the bilayer. The Cytoplasmic segment spans residues 212-240 (ARACQHAQGIARLHKRQRLAHQGFGLKGA). Residues 241-266 (ATLTILLGIFFLCWGPFFLHLTLIVL) form a helical membrane-spanning segment. Residues 267 to 279 (CPQHPTCSCIFKN) are Extracellular-facing. Residues 280–300 (FNLFLALIICNAIIDPLIYAF) form a helical membrane-spanning segment. Topologically, residues 301–317 (RSQELRRTLKEVLLCSW) are cytoplasmic. Cys-315 carries S-palmitoyl cysteine lipidation.

It belongs to the G-protein coupled receptor 1 family. In terms of assembly, interacts with MGRN1, but does not undergo MGRN1-mediated ubiquitination; this interaction competes with GNAS-binding and thus inhibits agonist-induced cAMP production. Interacts with OPN3; the interaction results in a decrease in MC1R-mediated cAMP signaling and ultimately a decrease in melanin production in melanocytes.

The protein localises to the cell membrane. Its function is as follows. Receptor for MSH (alpha, beta and gamma) and ACTH. The activity of this receptor is mediated by G proteins which activate adenylate cyclase. Mediates melanogenesis, the production of eumelanin (black/brown) and phaeomelanin (red/yellow), via regulation of cAMP signaling in melanocytes. This Papio anubis (Olive baboon) protein is Melanocyte-stimulating hormone receptor (MC1R).